Consider the following 175-residue polypeptide: MVVYDLLVSLSKESIDVLRFIETNLAAFNQQYIFFNIQRKNSIMTPLLITPQQEKISQIVEFLMDEYNKSNRRPGPPREQPMQAYPLLSYQQSSEEQPMMPYQQPPGDDDQPYEQIYHKKHASQQVNTELSDYYQHILALGDEDKGMDSMLKLPERAKRESDDEDDMFPIKKLTT.

2 disordered regions span residues 68-111 and 154-175; these read NKSN…DDDQ and PERAKRESDDEDDMFPIKKLTT. The span at 95 to 106 shows a compositional bias: low complexity; sequence EEQPMMPYQQPP.

The protein belongs to the asfivirus H171R family.

The protein resides in the virion. This is an uncharacterized protein from African swine fever virus (isolate Pig/Kenya/KEN-50/1950) (ASFV).